The sequence spans 139 residues: Single-stranded DNA-binding protein 2 (139 aa).

Positions 1–104 constitute an SSB domain; the sequence is MLNRTVLVGR…VVADSVQFLE (104 aa). Residues 103 to 139 are disordered; that stretch reads LEPKNNNKQNNQQHNGQTQTGNNPFDNTEEDFSDLPF. Positions 106 to 125 are enriched in low complexity; the sequence is KNNNKQNNQQHNGQTQTGNN. Residues 129–139 show a composition bias toward acidic residues; that stretch reads NTEEDFSDLPF.

As to quaternary structure, homotetramer.

The polypeptide is Single-stranded DNA-binding protein 2 (ssb-p) (Staphylococcus aureus (strain COL)).